A 449-amino-acid chain; its full sequence is Mannan endo-1,6-alpha-mannosidase DCW1 (449 aa).

An N-terminal signal peptide occupies residues 1–21; the sequence is MLVNKVIGLLGVLFATRFTNA. N-linked (GlcNAc...) asparagine glycosylation is found at Asn-34, Asn-84, Asn-109, Asn-133, Asn-203, Asn-225, Asn-240, Asn-265, Asn-281, Asn-337, Asn-362, and Asn-420. The GPI-anchor amidated glycine moiety is linked to residue Gly-428. Positions 429–449 are cleaved as a propeptide — removed in mature form; it reads AGIITAVIGISIVACALWLVF.

The protein belongs to the glycosyl hydrolase 76 family.

It is found in the cell membrane. The enzyme catalyses Random hydrolysis of (1-&gt;6)-alpha-D-mannosidic linkages in unbranched (1-&gt;6)-mannans.. Required for normal synthesis of the cell wall. This is Mannan endo-1,6-alpha-mannosidase DCW1 (DCW1) from Saccharomyces cerevisiae (strain ATCC 204508 / S288c) (Baker's yeast).